We begin with the raw amino-acid sequence, 125 residues long: UPF0538 protein C2C4.04c (125 aa).

It belongs to the UPF0538 family.

The protein is UPF0538 protein C2C4.04c of Schizosaccharomyces pombe (strain 972 / ATCC 24843) (Fission yeast).